Reading from the N-terminus, the 400-residue chain is Phosphoglycerate kinase (400 aa).

Substrate is bound by residues 19–21 (DLN), R38, 61–64 (HLGR), R124, and R161. ATP-binding positions include K211, G299, E330, and 356 to 359 (GGDS).

The protein belongs to the phosphoglycerate kinase family. Monomer.

Its subcellular location is the cytoplasm. It catalyses the reaction (2R)-3-phosphoglycerate + ATP = (2R)-3-phospho-glyceroyl phosphate + ADP. It participates in carbohydrate degradation; glycolysis; pyruvate from D-glyceraldehyde 3-phosphate: step 2/5. In Frankia alni (strain DSM 45986 / CECT 9034 / ACN14a), this protein is Phosphoglycerate kinase.